The sequence spans 83 residues: Large ribosomal subunit protein uL23 (83 aa).

The protein belongs to the universal ribosomal protein uL23 family. Part of the 50S ribosomal subunit. Contacts protein L29.

Binds to 23S rRNA. One of the proteins that surrounds the polypeptide exit tunnel on the outside of the ribosome. This chain is Large ribosomal subunit protein uL23, found in Archaeoglobus fulgidus (strain ATCC 49558 / DSM 4304 / JCM 9628 / NBRC 100126 / VC-16).